A 155-amino-acid polypeptide reads, in one-letter code: Ribonuclease H (155 aa).

Residues N4–Q145 enclose the RNase H type-1 domain. 4 residues coordinate Mg(2+): D13, E51, D73, and D137.

It belongs to the RNase H family. As to quaternary structure, monomer. Requires Mg(2+) as cofactor.

The protein localises to the cytoplasm. The catalysed reaction is Endonucleolytic cleavage to 5'-phosphomonoester.. Endonuclease that specifically degrades the RNA of RNA-DNA hybrids. This Rickettsia canadensis (strain McKiel) protein is Ribonuclease H.